A 272-amino-acid chain; its full sequence is MDQFAVFGNPVAHSKSPRIHQLFARQTGIEHRYGKILVPISKFQEALDTFLKQGGIGVNITVPFKEQAFIRANELTERARLSGAVNTLKLLNNNQLLGDNTDGIGLLTDLMRLEFITQGQHILIIGAGGAARGVLFPLLEFGCKITITNRTFSRAIQVANNFSAIGSIRPAEMKVLNSPEFDLIINATASGINGEIPTISPFIFNENCVCYDMFYQANLTPFISFARKHGVSRYADGLGMLVGQAAHSFKLWHGVLPEISPVLLTLEQELRS.

Shikimate-binding positions include 14 to 16 (SKS) and Thr61. Lys65 functions as the Proton acceptor in the catalytic mechanism. Glu77 contributes to the NADP(+) binding site. Shikimate-binding residues include Asn86 and Asp102. NADP(+) contacts are provided by residues 126–130 (GAGGA), 149–154 (NRTFSR), and Met213. Tyr215 is a shikimate binding site. Position 237 (Gly237) interacts with NADP(+).

It belongs to the shikimate dehydrogenase family. In terms of assembly, homodimer.

The enzyme catalyses shikimate + NADP(+) = 3-dehydroshikimate + NADPH + H(+). The protein operates within metabolic intermediate biosynthesis; chorismate biosynthesis; chorismate from D-erythrose 4-phosphate and phosphoenolpyruvate: step 4/7. Its function is as follows. Involved in the biosynthesis of the chorismate, which leads to the biosynthesis of aromatic amino acids. Catalyzes the reversible NADPH linked reduction of 3-dehydroshikimate (DHSA) to yield shikimate (SA). The polypeptide is Shikimate dehydrogenase (NADP(+)) (Photorhabdus laumondii subsp. laumondii (strain DSM 15139 / CIP 105565 / TT01) (Photorhabdus luminescens subsp. laumondii)).